Consider the following 232-residue polypeptide: Ribonuclease 3 (232 aa).

Positions 7 to 135 (IQAVESKLKF…ILGAVYLDGG (129 aa)) constitute an RNase III domain. A Mg(2+)-binding site is contributed by glutamate 48. Residue aspartate 52 is part of the active site. Mg(2+)-binding residues include asparagine 121 and glutamate 124. Glutamate 124 is an active-site residue. Residues 160–229 (NPKNRLQQFT…AKQALSTHDD (70 aa)) form the DRBM domain.

The protein belongs to the ribonuclease III family. Homodimer. It depends on Mg(2+) as a cofactor.

Its subcellular location is the cytoplasm. It catalyses the reaction Endonucleolytic cleavage to 5'-phosphomonoester.. Its function is as follows. Digests double-stranded RNA. Involved in the processing of primary rRNA transcript to yield the immediate precursors to the large and small rRNAs (23S and 16S). Processes some mRNAs, and tRNAs when they are encoded in the rRNA operon. Processes pre-crRNA and tracrRNA of type II CRISPR loci if present in the organism. In Chlamydia muridarum (strain MoPn / Nigg), this protein is Ribonuclease 3.